A 198-amino-acid polypeptide reads, in one-letter code: Protein GrpE (198 aa).

The protein belongs to the GrpE family. In terms of assembly, homodimer.

It is found in the cytoplasm. In terms of biological role, participates actively in the response to hyperosmotic and heat shock by preventing the aggregation of stress-denatured proteins, in association with DnaK and GrpE. It is the nucleotide exchange factor for DnaK and may function as a thermosensor. Unfolded proteins bind initially to DnaJ; upon interaction with the DnaJ-bound protein, DnaK hydrolyzes its bound ATP, resulting in the formation of a stable complex. GrpE releases ADP from DnaK; ATP binding to DnaK triggers the release of the substrate protein, thus completing the reaction cycle. Several rounds of ATP-dependent interactions between DnaJ, DnaK and GrpE are required for fully efficient folding. This is Protein GrpE from Actinobacillus pleuropneumoniae serotype 7 (strain AP76).